Reading from the N-terminus, the 395-residue chain is MSSRVTLHPGREKSLLRRHPWIFASAIESTKGRMNLGDTVDVYSHEDVWLGRGAYSPHSQIQVRIWTFTQNESVDNGFFQRRIARAQQSREELIERHGLTGYRLIAAESDGLPGVTIDVYANVIVCQLLSAGADKHREKIVWALKAQFPEHGIYERSDVAVRKKEGLEEITQVLAGDIPDEVIIEENGVKIIVNVKQGHKTGFYLDQRDNRAIAAQYAKDRDVLNCFCYTGTFGSYALAAGACSVTSLDVSDLALETAKRNVDINQLDSSKCEFINHDVFQALRDYKAQSKQFSQIILDPPKFVDSKASLNRACRGYKDINMLAMQIMAPGGILATFSCSGLMPFDLFQKVVADAALDAGREVQIIQRLSQAPDHPVSTNYPEGFYLKGLICKVL.

One can recognise a PUA domain in the interval 2-79 (SSRVTLHPGR…QNESVDNGFF (78 aa)).

Belongs to the methyltransferase superfamily. RlmI family.

Its subcellular location is the cytoplasm. The enzyme catalyses cytidine(1962) in 23S rRNA + S-adenosyl-L-methionine = 5-methylcytidine(1962) in 23S rRNA + S-adenosyl-L-homocysteine + H(+). Specifically methylates the cytosine at position 1962 (m5C1962) of 23S rRNA. In Pseudoalteromonas atlantica (strain T6c / ATCC BAA-1087), this protein is Ribosomal RNA large subunit methyltransferase I.